Here is a 913-residue protein sequence, read N- to C-terminus: Tyrosine-protein phosphatase non-receptor type 3 (913 aa).

Residues 29–312 (VICSIRFLDG…EHHSFFQAKK (284 aa)) enclose the FERM domain. Residues Ser-357, Ser-359, and Ser-367 each carry the phosphoserine modification. Disordered regions lie at residues 364–400 (ETKSLPSRSPPITPNWRSPRLRHEIRKPRHSSADNLA) and 417–473 (KGPL…PDGV). Thr-376 is modified (phosphothreonine). A Phosphoserine modification is found at Ser-381. Basic residues predominate over residues 382–393 (PRLRHEIRKPRH). Ser-425 bears the Phosphoserine mark. Positions 441 to 453 (SENNPAQSCLTQK) are enriched in polar residues. Low complexity predominate over residues 454 to 470 (SSSSVSPSSNAPGSCSP). In terms of domain architecture, PDZ spans 510 to 582 (LIRITPDEEG…DQVVMFIKAS (73 aa)). The Tyrosine-protein phosphatase domain occupies 646 to 901 (VLIQFEQLYR…KFVCEAILRV (256 aa)). Substrate-binding positions include Asp-811, 842 to 848 (CSAGIGR), and Gln-886. Cys-842 functions as the Phosphocysteine intermediate in the catalytic mechanism.

This sequence belongs to the protein-tyrosine phosphatase family. Non-receptor class subfamily.

It is found in the cell membrane. The protein resides in the cytoplasm. It localises to the cytoskeleton. The enzyme catalyses O-phospho-L-tyrosyl-[protein] + H2O = L-tyrosyl-[protein] + phosphate. Its function is as follows. May act at junctions between the membrane and the cytoskeleton. The chain is Tyrosine-protein phosphatase non-receptor type 3 (Ptpn3) from Mus musculus (Mouse).